We begin with the raw amino-acid sequence, 685 residues long: Translation factor GUF1 homolog, mitochondrial (685 aa).

A mitochondrion-targeting transit peptide spans 1–54; the sequence is MFSRLLNRGNGGVNKNITSGLLLRRTTTTTTRLSYINNSPTLSIRSFCSKSTTI. The tr-type G domain occupies 68–267; it reads DRIRNFSIIA…AVIDRIPPPQ (200 aa). GTP-binding positions include 77–84, 160–164, and 214–217; these read AHIDHGKT, DTPGH, and NKID.

It belongs to the TRAFAC class translation factor GTPase superfamily. Classic translation factor GTPase family. LepA subfamily.

The protein resides in the mitochondrion inner membrane. The enzyme catalyses GTP + H2O = GDP + phosphate + H(+). Its function is as follows. Promotes mitochondrial protein synthesis. May act as a fidelity factor of the translation reaction, by catalyzing a one-codon backward translocation of tRNAs on improperly translocated ribosomes. Binds to mitochondrial ribosomes in a GTP-dependent manner. This is Translation factor GUF1 homolog, mitochondrial (guf1) from Dictyostelium discoideum (Social amoeba).